A 290-amino-acid polypeptide reads, in one-letter code: Diaminopimelate epimerase (290 aa).

Residues Asn-14 and Asn-67 each coordinate substrate. Cys-76 serves as the catalytic Proton donor. Substrate is bound by residues 77-78, Asn-166, Asn-199, and 217-218; these read GN and ER. The active-site Proton acceptor is Cys-226. Residue 227–228 participates in substrate binding; the sequence is GT.

It belongs to the diaminopimelate epimerase family. In terms of assembly, homodimer.

Its subcellular location is the cytoplasm. The catalysed reaction is (2S,6S)-2,6-diaminopimelate = meso-2,6-diaminopimelate. It participates in amino-acid biosynthesis; L-lysine biosynthesis via DAP pathway; DL-2,6-diaminopimelate from LL-2,6-diaminopimelate: step 1/1. Its function is as follows. Catalyzes the stereoinversion of LL-2,6-diaminopimelate (L,L-DAP) to meso-diaminopimelate (meso-DAP), a precursor of L-lysine and an essential component of the bacterial peptidoglycan. This chain is Diaminopimelate epimerase, found in Geobacillus thermodenitrificans (strain NG80-2).